We begin with the raw amino-acid sequence, 530 residues long: ATP-dependent RNA helicase DBP3 (530 aa).

Residues 1–20 (MSKDEIKDKKRKSEEYEVVD) are compositionally biased toward basic and acidic residues. The segment at 1–77 (MSKDEIKDKK…VASVSTSSTV (77 aa)) is disordered. Residues 19–58 (VDKKKHKKDKKDKKEKKDKKEKKLKKDKKDKKDKKETKSE) adopt a coiled-coil conformation. Residues 21-50 (KKKHKKDKKDKKEKKDKKEKKLKKDKKDKK) are compositionally biased toward basic residues. Residues 67-77 (SVASVSTSSTV) are compositionally biased toward low complexity. The Q motif motif lies at 117 to 143 (LSFSHISLDSRIQAEISKFPKPTPIQA). The region spanning 146–322 (WPYLLAGKDV…STFMNSPIKV (177 aa)) is the Helicase ATP-binding domain. 159 to 166 (AETGSGKT) serves as a coordination point for ATP. The short motif at 269–272 (DEAD) is the DEAD box element. In terms of domain architecture, Helicase C-terminal spans 351 to 500 (KLLELLKKYQ…PVPEELKKFG (150 aa)).

It belongs to the DEAD box helicase family. DDX5/DBP2 subfamily.

The protein localises to the nucleus. It localises to the nucleolus. The catalysed reaction is ATP + H2O = ADP + phosphate + H(+). In terms of biological role, ATP-dependent RNA helicase required for 60S ribosomal subunit synthesis. Involved in efficient pre-rRNA processing, predominantly at site A3, which is necessary for the normal formation of 25S and 5.8S rRNAs. The sequence is that of ATP-dependent RNA helicase DBP3 (DBP3) from Vanderwaltozyma polyspora (strain ATCC 22028 / DSM 70294 / BCRC 21397 / CBS 2163 / NBRC 10782 / NRRL Y-8283 / UCD 57-17) (Kluyveromyces polysporus).